The primary structure comprises 132 residues: Small ribosomal subunit protein bS6 (132 aa).

Positions 96–132 (HAEGPSIQMQKRDERERGDRGDRPDRGDRGERGGFRR) are disordered. The span at 105-132 (QKRDERERGDRGDRPDRGDRGERGGFRR) shows a compositional bias: basic and acidic residues.

This sequence belongs to the bacterial ribosomal protein bS6 family.

Binds together with bS18 to 16S ribosomal RNA. This chain is Small ribosomal subunit protein bS6, found in Cereibacter sphaeroides (strain ATCC 17025 / ATH 2.4.3) (Rhodobacter sphaeroides).